The following is a 664-amino-acid chain: tRNA uridine 5-carboxymethylaminomethyl modification enzyme MnmG (664 aa).

FAD-binding positions include Gly-14–Gly-19, Val-126, and Ser-183. Gly-277–Phe-291 lines the NAD(+) pocket. Gln-374 serves as a coordination point for FAD.

Belongs to the MnmG family. In terms of assembly, homodimer. Heterotetramer of two MnmE and two MnmG subunits. Requires FAD as cofactor.

It localises to the cytoplasm. Its function is as follows. NAD-binding protein involved in the addition of a carboxymethylaminomethyl (cmnm) group at the wobble position (U34) of certain tRNAs, forming tRNA-cmnm(5)s(2)U34. The polypeptide is tRNA uridine 5-carboxymethylaminomethyl modification enzyme MnmG (Salinibacter ruber (strain DSM 13855 / M31)).